A 250-amino-acid polypeptide reads, in one-letter code: Adenosylcobinamide-GDP ribazoletransferase (250 aa).

6 helical membrane passes run 33–53 (IASY…LFYI), 63–83 (IVMT…HIDG), 109–129 (LGTN…LFLT), 137–157 (LTAL…SMMI), 180–200 (FAIA…LAVF), and 203–223 (ILTI…LRIG).

It belongs to the CobS family. The cofactor is Mg(2+).

Its subcellular location is the cell membrane. The catalysed reaction is alpha-ribazole + adenosylcob(III)inamide-GDP = adenosylcob(III)alamin + GMP + H(+). It carries out the reaction alpha-ribazole 5'-phosphate + adenosylcob(III)inamide-GDP = adenosylcob(III)alamin 5'-phosphate + GMP + H(+). It functions in the pathway cofactor biosynthesis; adenosylcobalamin biosynthesis; adenosylcobalamin from cob(II)yrinate a,c-diamide: step 7/7. In terms of biological role, joins adenosylcobinamide-GDP and alpha-ribazole to generate adenosylcobalamin (Ado-cobalamin). Also synthesizes adenosylcobalamin 5'-phosphate from adenosylcobinamide-GDP and alpha-ribazole 5'-phosphate. In Thermoanaerobacter sp. (strain X514), this protein is Adenosylcobinamide-GDP ribazoletransferase.